A 2212-amino-acid chain; its full sequence is Nonribosomal peptide synthetase ftmPS (2212 aa).

Residues threonine 74–proline 473 are adenylation 1. In terms of domain architecture, Carrier 1 spans proline 592–glutamine 669. Serine 629 is subject to O-(pantetheine 4'-phosphoryl)serine. Positions glutamate 708 to valine 973 are condensation 1. The segment at threonine 1167 to arginine 1564 is adenylation 2. One can recognise a Carrier 2 domain in the interval proline 1678–aspartate 1757. Residue serine 1715 is modified to O-(pantetheine 4'-phosphoryl)serine. Residues histidine 1815–serine 2070 form a condensation 2 region.

The protein belongs to the NRP synthetase family.

The catalysed reaction is L-proline + L-tryptophan + 2 ATP = brevianamide F + 2 AMP + 2 diphosphate + 2 H(+). It participates in mycotoxin biosynthesis. In terms of biological role, nonribosomal peptide synthetase; part of the gene cluster that mediates the biosynthesis of fumitremorgins, indole alkaloids that carry not only intriguing chemical structures, but also interesting biological and pharmacological activities. The biosynthesis of fumitremorgin-type alkaloids begins by condensation of the two amino acids L-tryptophan and L-proline to brevianamide F, catalyzed by the non-ribosomal peptide synthetase ftmPS/ftmA. Brevianamide F is then prenylated by the prenyltransferase ftmPT1/ftmB in the presence of dimethylallyl diphosphate, resulting in the formation of tryprostatin B. The three cytochrome P450 monooxygenases, ftmP450-1/ftmC, ftmP450-2/ftmE and ftmP450-3/FtmG, are responsible for the conversion of tryprostatin B to 6-hydroxytryprostatin B, tryprostatin A to fumitremorgin C and fumitremorgin C to 12,13-dihydroxyfumitremorgin C, respectively. The putative methyltransferase ftmMT/ftmD is expected for the conversion of 6-hydroxytryprostatin B to tryprostatin A. FtmPT2/FtmH catalyzes the prenylation of 12,13-dihydroxyfumitre-morgin C in the presence of dimethylallyl diphosphate, resulting in the formation of fumitremorgin B. Fumitremorgin B is further converted to verruculogen by ftmOx1/ftmF via the insertion of an endoperoxide bond between the two prenyl moieties. Finally, verruculogen is further converted to fumitremorgin A by the verruculogen prenyltransferase ftmPT3. This Neosartorya fischeri (strain ATCC 1020 / DSM 3700 / CBS 544.65 / FGSC A1164 / JCM 1740 / NRRL 181 / WB 181) (Aspergillus fischerianus) protein is Nonribosomal peptide synthetase ftmPS (ftmPS).